A 159-amino-acid polypeptide reads, in one-letter code: Ribosome maturation factor RimP (159 aa).

Belongs to the RimP family.

It is found in the cytoplasm. In terms of biological role, required for maturation of 30S ribosomal subunits. This Lacticaseibacillus casei (strain BL23) (Lactobacillus casei) protein is Ribosome maturation factor RimP.